Reading from the N-terminus, the 205-residue chain is Small ribosomal subunit protein uS4 (205 aa).

Positions 94–157 (SRLDTVVYRM…KQIPLIQESV (64 aa)) constitute an S4 RNA-binding domain.

It belongs to the universal ribosomal protein uS4 family. Part of the 30S ribosomal subunit. Contacts protein S5. The interaction surface between S4 and S5 is involved in control of translational fidelity.

One of the primary rRNA binding proteins, it binds directly to 16S rRNA where it nucleates assembly of the body of the 30S subunit. In terms of biological role, with S5 and S12 plays an important role in translational accuracy. This chain is Small ribosomal subunit protein uS4, found in Rickettsia felis (strain ATCC VR-1525 / URRWXCal2) (Rickettsia azadi).